The following is a 102-amino-acid chain: Gonadotropin subunit beta-1 (102 aa).

5 cysteine pairs are disulfide-bonded: Cys-8–Cys-51, Cys-20–Cys-65, Cys-31–Cys-77, Cys-35–Cys-79, and Cys-82–Cys-89. Asn-12 carries N-linked (GlcNAc...) asparagine glycosylation.

Belongs to the glycoprotein hormones subunit beta family. In terms of assembly, heterodimer of an alpha and a beta chain.

Its subcellular location is the secreted. Its function is as follows. Involved in gametogenesis and steroidogenesis. This chain is Gonadotropin subunit beta-1 (cgba), found in Thunnus obesus (Bigeye tuna).